The primary structure comprises 360 residues: Phospho-N-acetylmuramoyl-pentapeptide-transferase (360 aa).

Transmembrane regions (helical) follow at residues 26-46, 74-94, 97-117, 134-154, 168-188, 199-219, 236-256, 263-283, 288-308, and 338-358; these read AILG…KLIE, MGGL…GDLG, YVWV…IDDY, YILQ…TAAN, VMPQ…VGSS, GLAI…AYLS, SGEL…FLWF, VFMG…IAVL, ILLV…ILQV, and VIVR…ATLK.

Belongs to the glycosyltransferase 4 family. MraY subfamily. Mg(2+) serves as cofactor.

Its subcellular location is the cell inner membrane. The enzyme catalyses UDP-N-acetyl-alpha-D-muramoyl-L-alanyl-gamma-D-glutamyl-meso-2,6-diaminopimeloyl-D-alanyl-D-alanine + di-trans,octa-cis-undecaprenyl phosphate = di-trans,octa-cis-undecaprenyl diphospho-N-acetyl-alpha-D-muramoyl-L-alanyl-D-glutamyl-meso-2,6-diaminopimeloyl-D-alanyl-D-alanine + UMP. It functions in the pathway cell wall biogenesis; peptidoglycan biosynthesis. Its function is as follows. Catalyzes the initial step of the lipid cycle reactions in the biosynthesis of the cell wall peptidoglycan: transfers peptidoglycan precursor phospho-MurNAc-pentapeptide from UDP-MurNAc-pentapeptide onto the lipid carrier undecaprenyl phosphate, yielding undecaprenyl-pyrophosphoryl-MurNAc-pentapeptide, known as lipid I. This chain is Phospho-N-acetylmuramoyl-pentapeptide-transferase, found in Shewanella oneidensis (strain ATCC 700550 / JCM 31522 / CIP 106686 / LMG 19005 / NCIMB 14063 / MR-1).